Consider the following 1263-residue polypeptide: DNA-directed RNA polymerase subunit beta (1263 aa).

It belongs to the RNA polymerase beta chain family. In terms of assembly, the RNAP catalytic core consists of 2 alpha, 1 beta, 1 beta' and 1 omega subunit. When a sigma factor is associated with the core the holoenzyme is formed, which can initiate transcription.

It catalyses the reaction RNA(n) + a ribonucleoside 5'-triphosphate = RNA(n+1) + diphosphate. Functionally, DNA-dependent RNA polymerase catalyzes the transcription of DNA into RNA using the four ribonucleoside triphosphates as substrates. This chain is DNA-directed RNA polymerase subunit beta, found in Thermotoga sp. (strain RQ2).